The chain runs to 204 residues: Large ribosomal subunit protein eL15 (204 aa).

The protein belongs to the eukaryotic ribosomal protein eL15 family. Component of the large ribosomal subunit.

It localises to the cytoplasm. Its function is as follows. Component of the large ribosomal subunit. The ribosome is a large ribonucleoprotein complex responsible for the synthesis of proteins in the cell. This chain is Large ribosomal subunit protein eL15 (rpl15), found in Anguilla japonica (Japanese eel).